A 370-amino-acid polypeptide reads, in one-letter code: Glycerophosphodiester phosphodiesterase GDPD3 (370 aa).

The GP-PDE domain maps to 35–322 (FVLMGHRGFG…DMVKDISEAI (288 aa)).

The protein belongs to the glycerophosphoryl diester phosphodiesterase family. In terms of tissue distribution, expressed in flowers and siliques.

The enzyme catalyses a sn-glycero-3-phosphodiester + H2O = an alcohol + sn-glycerol 3-phosphate + H(+). In Arabidopsis thaliana (Mouse-ear cress), this protein is Glycerophosphodiester phosphodiesterase GDPD3.